The sequence spans 882 residues: Kelch repeat-containing protein 2 (882 aa).

The interval 41 to 60 is disordered; the sequence is TPTLPPNQHRGISGASTALP. Kelch repeat units lie at residues 99–143, 153–207, 213–267, 268–317, 319–369, and 371–417; these read RIFV…PPRV, AYVV…IIAS, KLYL…AYDN, KLWV…VYKH, MCVL…LMKN, and KLLI…LCPG. Residue threonine 455 is modified to Phosphothreonine. A compositionally biased stretch (basic and acidic residues) spans 480–496; sequence LDDKAFERKSDREEKKP. The interval 480 to 516 is disordered; that stretch reads LDDKAFERKSDREEKKPQSSKVDSSINKESPGTGIKV. The span at 498–509 shows a compositional bias: polar residues; that stretch reads SSKVDSSINKES. Serine 509 is modified (phosphoserine). Coiled-coil stretches lie at residues 550-685 and 728-881; these read KNLF…QKIT and NKIE…LEQK.

As to quaternary structure, interacts with KEL1.

This Saccharomyces cerevisiae (strain ATCC 204508 / S288c) (Baker's yeast) protein is Kelch repeat-containing protein 2 (KEL2).